Consider the following 313-residue polypeptide: Phosphoenolpyruvate phosphomutase (313 aa).

Residues 1-23 (MNATERPGSDGTGSPESVGSRLK) are disordered. The active-site Nucleophile is the Asp-69.

Belongs to the isocitrate lyase/PEP mutase superfamily. PEP mutase family.

It carries out the reaction phosphoenolpyruvate + H(+) = 3-phosphonopyruvate. It participates in secondary metabolite biosynthesis; bialaphos biosynthesis. In terms of biological role, formation of a carbon-phosphorus bond by converting phosphoenolpyruvate (PEP) to phosphonopyruvate (P-Pyr). The protein is Phosphoenolpyruvate phosphomutase (ppm) of Streptomyces viridochromogenes (strain DSM 40736 / JCM 4977 / BCRC 1201 / Tue 494).